The sequence spans 1199 residues: DNA-directed RNA polymerase subunit beta' (1199 aa).

Zn(2+)-binding residues include cysteine 60, cysteine 62, cysteine 75, and cysteine 78. Residues aspartate 449, aspartate 451, and aspartate 453 each coordinate Mg(2+). Positions 818, 892, 899, and 902 each coordinate Zn(2+).

Belongs to the RNA polymerase beta' chain family. As to quaternary structure, the RNAP catalytic core consists of 2 alpha, 1 beta, 1 beta' and 1 omega subunit. When a sigma factor is associated with the core the holoenzyme is formed, which can initiate transcription. The cofactor is Mg(2+). It depends on Zn(2+) as a cofactor.

It catalyses the reaction RNA(n) + a ribonucleoside 5'-triphosphate = RNA(n+1) + diphosphate. Its function is as follows. DNA-dependent RNA polymerase catalyzes the transcription of DNA into RNA using the four ribonucleoside triphosphates as substrates. This chain is DNA-directed RNA polymerase subunit beta', found in Geobacillus kaustophilus (strain HTA426).